The sequence spans 616 residues: 2-isopropylmalate synthase (616 aa).

The disordered stretch occupies residues Met1 to Ser34. One can recognise a Pyruvate carboxyltransferase domain in the interval Pro67 to Arg341. Mg(2+) contacts are provided by Asp76, His280, His282, and Asn316. Residues Arg490–Val616 are regulatory domain.

This sequence belongs to the alpha-IPM synthase/homocitrate synthase family. LeuA type 2 subfamily. Homodimer. The cofactor is Mg(2+).

The protein localises to the cytoplasm. It catalyses the reaction 3-methyl-2-oxobutanoate + acetyl-CoA + H2O = (2S)-2-isopropylmalate + CoA + H(+). It participates in amino-acid biosynthesis; L-leucine biosynthesis; L-leucine from 3-methyl-2-oxobutanoate: step 1/4. Functionally, catalyzes the condensation of the acetyl group of acetyl-CoA with 3-methyl-2-oxobutanoate (2-ketoisovalerate) to form 3-carboxy-3-hydroxy-4-methylpentanoate (2-isopropylmalate). The chain is 2-isopropylmalate synthase from Corynebacterium glutamicum (strain R).